Reading from the N-terminus, the 127-residue chain is Fluoride-specific ion channel FluC (127 aa).

4 helical membrane-spanning segments follow: residues T4–V24, L35–F55, T71–L91, and V103–W123. Na(+)-binding residues include G75 and T78.

It belongs to the fluoride channel Fluc/FEX (TC 1.A.43) family.

It is found in the cell inner membrane. The catalysed reaction is fluoride(in) = fluoride(out). Its activity is regulated as follows. Na(+) is not transported, but it plays an essential structural role and its presence is essential for fluoride channel function. Functionally, fluoride-specific ion channel. Important for reducing fluoride concentration in the cell, thus reducing its toxicity. The chain is Fluoride-specific ion channel FluC from Pectobacterium carotovorum subsp. carotovorum (strain PC1).